We begin with the raw amino-acid sequence, 291 residues long: Ribosomal RNA small subunit methyltransferase H (291 aa).

Residues 25–27 (GGH), D45, F73, D88, and Q95 contribute to the S-adenosyl-L-methionine site.

It belongs to the methyltransferase superfamily. RsmH family.

It is found in the cytoplasm. The enzyme catalyses cytidine(1402) in 16S rRNA + S-adenosyl-L-methionine = N(4)-methylcytidine(1402) in 16S rRNA + S-adenosyl-L-homocysteine + H(+). In terms of biological role, specifically methylates the N4 position of cytidine in position 1402 (C1402) of 16S rRNA. In Flavobacterium psychrophilum (strain ATCC 49511 / DSM 21280 / CIP 103535 / JIP02/86), this protein is Ribosomal RNA small subunit methyltransferase H.